Here is a 382-residue protein sequence, read N- to C-terminus: uncharacterized protein (382 aa).

12 helical membrane passes run 8–28 (VMLL…LNTL), 45–65 (MVSS…GYLI), 75–95 (YLAS…VGFW), 102–122 (FIAG…LMCS), 131–151 (LLAA…LLVS), 157–177 (LLHV…PLLF), 204–224 (LGVN…GLMP), 231–251 (GMAN…GILG), 270–290 (VQVF…AMAP), 291–311 (ALFI…AWAC), 325–345 (ALLL…AMLM), and 349–369 (SDNL…LMLL).

Belongs to the major facilitator superfamily. YcaD (TC 2.A.1.26) family.

It localises to the cell inner membrane. This is an uncharacterized protein from Salmonella dublin (strain CT_02021853).